A 236-amino-acid chain; its full sequence is Probable metal transport system ATP-binding protein CT_416 (236 aa).

Residues 5–236 form the ABC transporter domain; that stretch reads MLLENVSFRY…FCCNTFGRCP (232 aa). 39 to 46 is an ATP binding site; that stretch reads GPNGGGKT.

Belongs to the ABC transporter superfamily.

It is found in the cell inner membrane. Part of an ATP-driven transport system CT_415/CT_416/CT_417 for a metal. Probably responsible for energy coupling to the transport system. The polypeptide is Probable metal transport system ATP-binding protein CT_416 (Chlamydia trachomatis serovar D (strain ATCC VR-885 / DSM 19411 / UW-3/Cx)).